The primary structure comprises 378 residues: Probable 3-hydroxyisobutyryl-CoA hydrolase 3 (378 aa).

Glu-138 and Asp-146 together coordinate substrate.

This sequence belongs to the enoyl-CoA hydratase/isomerase family.

The protein resides in the peroxisome. It catalyses the reaction 3-hydroxy-2-methylpropanoyl-CoA + H2O = 3-hydroxy-2-methylpropanoate + CoA + H(+). The protein operates within amino-acid degradation; L-valine degradation. Involved in valine catabolism. This Arabidopsis thaliana (Mouse-ear cress) protein is Probable 3-hydroxyisobutyryl-CoA hydrolase 3.